The sequence spans 195 residues: Interferon tau-1 (195 aa).

An N-terminal signal peptide occupies residues 1–23; that stretch reads MAFVLSLLMALVLVSYGPGGSLG. 2 disulfides stabilise this stretch: Cys24-Cys122 and Cys52-Cys162.

This sequence belongs to the alpha/beta interferon family. IFN-alphaII subfamily. Constitutively and exclusively expressed in the mononuclear cells of the extraembryonic trophectoderm.

Its subcellular location is the secreted. Paracrine hormone primarily responsible for maternal recognition of pregnancy. Interacts with endometrial receptors, probably type I interferon receptors, and blocks estrogen receptor expression, preventing the estrogen-induced increase in oxytocin receptor expression in the endometrium. This results in the suppression of the pulsatile endometrial release of the luteolytic hormone prostaglandin F2-alpha, hindering the regression of the corpus luteum (luteolysis) and therefore a return to ovarian cyclicity. This, and a possible direct effect of IFN-tau on prostaglandin synthesis, leads in turn to continued ovarian progesterone secretion, which stimulates the secretion by the endometrium of the nutrients required for the growth of the conceptus. In summary, displays particularly high antiviral and antiproliferative potency concurrently with particular weak cytotoxicity, high antiluteolytic activity and immunomodulatory properties. In contrast with other IFNs, IFN-tau is not virally inducible. This Ovis aries (Sheep) protein is Interferon tau-1 (IFNT1).